The chain runs to 251 residues: Tritrans,polycis-undecaprenyl-diphosphate synthase (geranylgeranyl-diphosphate specific) (251 aa).

The active site involves Asp-29. Mg(2+) is bound at residue Asp-29. Substrate-binding positions include 30–33, Phe-34, His-46, and 74–76; these read GNRR and STE. Asn-77 functions as the Proton acceptor in the catalytic mechanism. Substrate is bound by residues Phe-78, Arg-80, Arg-200, and 206 to 208; that span reads RLS.

The protein belongs to the UPP synthase family. In terms of assembly, homodimer. It depends on Mg(2+) as a cofactor.

The enzyme catalyses geranylgeranyl diphosphate + 7 isopentenyl diphosphate = tri-trans,hepta-cis-undecaprenyl diphosphate + 7 diphosphate. Functionally, catalyzes the sequential condensation of isopentenyl diphosphate (IPP) with geranylgeranyl diphosphate (GGPP) to yield (2Z,6Z,10Z,14Z,18Z,22Z,26Z,30E,34E,38E)-undecaprenyl diphosphate (tritrans,heptacis-UPP). It is probably the precursor of glycosyl carrier lipids. The polypeptide is Tritrans,polycis-undecaprenyl-diphosphate synthase (geranylgeranyl-diphosphate specific) (Archaeoglobus fulgidus (strain ATCC 49558 / DSM 4304 / JCM 9628 / NBRC 100126 / VC-16)).